The sequence spans 249 residues: uncharacterized protein (249 aa).

The span at 51–67 (IPKDSLTNGKSSKNCMS) shows a compositional bias: polar residues. 2 disordered regions span residues 51–131 (IPKD…DSPV) and 205–240 (YLNASLSEDDTDSIVGTDYSEEEKESISETESSSDG). Residues 93–106 (SFQSMNSSMSSSTQ) show a composition bias toward low complexity. Residues 110–129 (RILDEKNKDQSSSNENDRDS) are compositionally biased toward basic and acidic residues.

Belongs to the asfivirus DP238L family.

This is an uncharacterized protein from African swine fever virus (isolate Tick/Malawi/Lil 20-1/1983) (ASFV).